A 334-amino-acid chain; its full sequence is MATLKEKLIAPVADDETAVPNNKITVVGVGQVGMACAISILGKSLADELALVDVLEDKLKGEMMDLQHGSLFLQTPKIVADKDYSVTANSKIVVVTAGVRQQEGESRLNLVQRNVNVFKFIIPQIVKYSPDCTIIVVSNPVDILTYVTWKLSGLPKHRVIGSGCNLDSARFRYLMAEKLGIHPSSCHGWILGEHGDSSVAVWSGVNVAGVSLQELNPEMGTDNDSENWKEVHKMVVDSAYEVIKLKGYTNWAIGLSVADLIESMLKNLSRIHPVSTMVKGMYGIENEVFLSLPCILNARGLTSVINQKLKDDEVAQLRKSADTLWDIQKDLKDL.

The residue at position 2 (Ala-2) is an N-acetylalanine. An N6-acetyllysine modification is found at Lys-7. NAD(+) is bound by residues 30 to 58 and Arg-100; that span reads GQVG…LEDK. Residue Ser-44 is modified to Phosphoserine. Lys-58 carries the N6-acetyllysine modification. Arg-107 provides a ligand contact to substrate. Lys-119 bears the N6-acetyllysine mark. Asn-139 is an NAD(+) binding site. 2 residues coordinate substrate: Asn-139 and Arg-170. His-194 serves as the catalytic Proton acceptor. Residue Tyr-240 is modified to Phosphotyrosine. Thr-249 serves as a coordination point for substrate. The residue at position 329 (Lys-329) is an N6-acetyllysine.

It belongs to the LDH/MDH superfamily. LDH family. In terms of assembly, homotetramer. Interacts with PTEN upstream reading frame protein MP31; the interaction leads to inhibition of mitochondrial lactate dehydrogenase activity, preventing conversion of lactate to pyruvate in mitochondria.

It localises to the cytoplasm. The protein localises to the mitochondrion inner membrane. It carries out the reaction (S)-lactate + NAD(+) = pyruvate + NADH + H(+). Its pathway is fermentation; pyruvate fermentation to lactate; (S)-lactate from pyruvate: step 1/1. Interconverts simultaneously and stereospecifically pyruvate and lactate with concomitant interconversion of NADH and NAD(+). The sequence is that of L-lactate dehydrogenase B chain (Ldhb) from Rattus norvegicus (Rat).